The primary structure comprises 363 residues: D(1) dopamine receptor (363 aa).

Residues 1–24 (MAVLDLNLTTVIDSGFMESDRSVR) are Extracellular-facing. A glycan (N-linked (GlcNAc...) asparagine) is linked at N7. A helical membrane pass occupies residues 25–45 (VLTGCFLSVLILSTLLGNTLV). The Cytoplasmic portion of the chain corresponds to 46-61 (CAAVTKFRHLRSKVTN). A helical transmembrane segment spans residues 62 to 81 (FFVISLAVSDLLVAVLVMPW). The Extracellular portion of the chain corresponds to 82 to 98 (KAVTEVAGFWPFGAFCD). C97 and C187 are joined by a disulfide. The helical transmembrane segment at 99 to 120 (IWVAFDIMCSTASILNLCVISV) threads the bilayer. Residues 121-139 (DRYWAISSPFRYERKMTPR) lie on the Cytoplasmic side of the membrane. The helical transmembrane segment at 140–164 (VAFVMISGAWTLSVLISFIPVQLKW) threads the bilayer. At 165–194 (HKAQPIGFLEVNASRRDLPTDNCDSSLNRT) the chain is on the extracellular side. A helical membrane pass occupies residues 195–219 (YAISSSLISFYIPVAIMIVTYTQIY). The Cytoplasmic segment spans residues 220-271 (RIAQKQIRRISALERAAESAQIRHDSMGSGSNMDLESSFKLSFKRETKVLKT). A helical transmembrane segment spans residues 272–297 (LSVIMGVFVCCWLPFFILNCMVPFCK). Residues 298–310 (RTSNGLPCISPTT) are Extracellular-facing. Residues 311–330 (FDVFVWFGWANSSLNPIIYA) traverse the membrane as a helical segment. Over 331–363 (FNADFRRAFAILLGCQRLCPGSISMETPSLNKN) the chain is Cytoplasmic. C345 carries the S-palmitoyl cysteine lipid modification.

This sequence belongs to the G-protein coupled receptor 1 family. As to expression, retina.

It localises to the cell membrane. It is found in the cell projection. The protein resides in the cilium membrane. Dopamine receptor whose activity is mediated by G proteins which activate adenylyl cyclase. Could be involved in growth hormone release. The polypeptide is D(1) dopamine receptor (Carassius auratus (Goldfish)).